Reading from the N-terminus, the 212-residue chain is Holliday junction branch migration complex subunit RuvA (212 aa).

The tract at residues 1-66 is domain I; it reads MISGLKGTLK…ERGQKLFGFL (66 aa). The tract at residues 67-145 is domain II; the sequence is TEQDKEFFKV…KLELFLSGTS (79 aa). The interval 146 to 162 is flexible linker; it reads KEPSISLSSFSETPEEA. A domain III region spans residues 163–212; the sequence is ALSRKREIAILGLVQLGFEEKTASKEVDKILKSSSPTDPGEIIREILKSL.

It belongs to the RuvA family. Homotetramer. Forms an RuvA(8)-RuvB(12)-Holliday junction (HJ) complex. HJ DNA is sandwiched between 2 RuvA tetramers; dsDNA enters through RuvA and exits via RuvB. An RuvB hexamer assembles on each DNA strand where it exits the tetramer. Each RuvB hexamer is contacted by two RuvA subunits (via domain III) on 2 adjacent RuvB subunits; this complex drives branch migration. In the full resolvosome a probable DNA-RuvA(4)-RuvB(12)-RuvC(2) complex forms which resolves the HJ.

The protein localises to the cytoplasm. Its function is as follows. The RuvA-RuvB-RuvC complex processes Holliday junction (HJ) DNA during genetic recombination and DNA repair, while the RuvA-RuvB complex plays an important role in the rescue of blocked DNA replication forks via replication fork reversal (RFR). RuvA specifically binds to HJ cruciform DNA, conferring on it an open structure. The RuvB hexamer acts as an ATP-dependent pump, pulling dsDNA into and through the RuvAB complex. HJ branch migration allows RuvC to scan DNA until it finds its consensus sequence, where it cleaves and resolves the cruciform DNA. This Leptospira borgpetersenii serovar Hardjo-bovis (strain JB197) protein is Holliday junction branch migration complex subunit RuvA.